A 78-amino-acid polypeptide reads, in one-letter code: LYR motif-containing protein 9 (78 aa).

It belongs to the complex I LYR family. LYRM9 subfamily.

The sequence is that of LYR motif-containing protein 9 (Lyrm9) from Mus musculus (Mouse).